Consider the following 424-residue polypeptide: Enolase (424 aa).

Q162 contributes to the (2R)-2-phosphoglycerate binding site. E204 functions as the Proton donor in the catalytic mechanism. Residues D241, E284, and D311 each coordinate Mg(2+). Positions 336, 365, 366, and 387 each coordinate (2R)-2-phosphoglycerate. K336 functions as the Proton acceptor in the catalytic mechanism.

The protein belongs to the enolase family. The cofactor is Mg(2+).

The protein resides in the cytoplasm. Its subcellular location is the secreted. The protein localises to the cell surface. The catalysed reaction is (2R)-2-phosphoglycerate = phosphoenolpyruvate + H2O. Its pathway is carbohydrate degradation; glycolysis; pyruvate from D-glyceraldehyde 3-phosphate: step 4/5. Functionally, catalyzes the reversible conversion of 2-phosphoglycerate (2-PG) into phosphoenolpyruvate (PEP). It is essential for the degradation of carbohydrates via glycolysis. The sequence is that of Enolase from Maricaulis maris (strain MCS10) (Caulobacter maris).